A 207-amino-acid polypeptide reads, in one-letter code: Guanylate kinase (207 aa).

The region spanning 6 to 185 (GLLIVLSGPS…AKNRIQCIVE (180 aa)) is the Guanylate kinase-like domain. An ATP-binding site is contributed by 13-20 (GPSGVGKG).

This sequence belongs to the guanylate kinase family.

The protein resides in the cytoplasm. It carries out the reaction GMP + ATP = GDP + ADP. Functionally, essential for recycling GMP and indirectly, cGMP. This Staphylococcus aureus (strain USA300) protein is Guanylate kinase.